The primary structure comprises 179 residues: Large ribosomal subunit protein uL6c (179 aa).

Belongs to the universal ribosomal protein uL6 family. In terms of assembly, part of the 50S ribosomal subunit.

It is found in the plastid. The protein resides in the chloroplast. Binds 23S rRNA. This Guillardia theta (Cryptophyte) protein is Large ribosomal subunit protein uL6c (rpl6).